Here is a 298-residue protein sequence, read N- to C-terminus: D-alanine--D-alanine ligase (298 aa).

The region spanning phenylalanine 97 to lysine 290 is the ATP-grasp domain. Residue proline 124–threonine 173 participates in ATP binding. The Mg(2+) site is built by aspartate 245, glutamate 257, and asparagine 259.

The protein belongs to the D-alanine--D-alanine ligase family. It depends on Mg(2+) as a cofactor. Requires Mn(2+) as cofactor.

The protein localises to the cytoplasm. The enzyme catalyses 2 D-alanine + ATP = D-alanyl-D-alanine + ADP + phosphate + H(+). Its pathway is cell wall biogenesis; peptidoglycan biosynthesis. Functionally, cell wall formation. This chain is D-alanine--D-alanine ligase, found in Petrotoga mobilis (strain DSM 10674 / SJ95).